We begin with the raw amino-acid sequence, 189 residues long: Chitin synthase 2 (189 aa).

This sequence belongs to the chitin synthase family. Class II subfamily.

It localises to the cell membrane. It catalyses the reaction [(1-&gt;4)-N-acetyl-beta-D-glucosaminyl](n) + UDP-N-acetyl-alpha-D-glucosamine = [(1-&gt;4)-N-acetyl-beta-D-glucosaminyl](n+1) + UDP + H(+). Its function is as follows. Polymerizes chitin, a structural polymer of the cell wall and septum, by transferring the sugar moiety of UDP-GlcNAc to the non-reducing end of the growing chitin polymer. The chain is Chitin synthase 2 (CHS2) from Exophiala exophialae (Black yeast-like fungus).